The chain runs to 163 residues: Anthranilate 1,2-dioxygenase small subunit (163 aa).

It belongs to the bacterial ring-hydroxylating dioxygenase beta subunit family. The anthranilate dioxygenase (AntDO) multicomponent enzyme system is composed of an oxygenase component and a NADH:acceptor reductase component (AntC). The oxygenase component is a heterohexamer of 3 large (AntA) and 3 small (AntB) subunits.

It catalyses the reaction anthranilate + NADH + O2 + 3 H(+) = catechol + NH4(+) + CO2 + NAD(+). The enzyme catalyses anthranilate + NADPH + O2 + 3 H(+) = catechol + NH4(+) + CO2 + NADP(+). The protein operates within aromatic compound metabolism; anthranilate degradation via hydroxylation; catechol from anthranilate: step 1/1. Functionally, component of anthranilate dioxygenase multicomponent enzyme system which catalyzes the incorporation of both atoms of molecular oxygen into anthranilate to form catechol. The protein is Anthranilate 1,2-dioxygenase small subunit of Acinetobacter baylyi (strain ATCC 33305 / BD413 / ADP1).